The following is a 422-amino-acid chain: Target of rapamycin complex 2 subunit bit61 (422 aa).

Residues 48–69 (VTTKESNVGDSDTTENIKSPFN) are compositionally biased toward polar residues. The segment at 48–101 (VTTKESNVGDSDTTENIKSPFNGQWPFSRRSSQSSSHPVFEETHWSKHSKRPGK) is disordered. Serine 109, serine 132, and serine 201 each carry phosphoserine.

Belongs to the BIT61 family. As to quaternary structure, the target of rapamycin complex 2 (TORC2) is composed of at least bit61, pop3/wat1, sin1, ste20 and tor1. In terms of processing, either Thr-23, Thr-25 or Ser-26 and Ser-78 or Ser-79 are phosphorylated as well.

Its subcellular location is the cytoplasm. The protein localises to the nucleus. Component of TORC2, which regulates multiple cellular processes to control cell growth in response to environmental signals. TORC2 is required for cell survival under various stress conditions. TORC2 positively controls G1 cell-cycle arrest, sexual development and amino acid uptake. Positively regulates amino acid uptake through the control of expression of amino acid permeases. In Schizosaccharomyces pombe (strain 972 / ATCC 24843) (Fission yeast), this protein is Target of rapamycin complex 2 subunit bit61.